The chain runs to 425 residues: Protein upregulated in glial subsets pugs-5 (425 aa).

Over residues 355–373 the composition is skewed to basic and acidic residues; that stretch reads NNNDVEKSTQIEKKPEKQG. Residues 355-407 are disordered; sequence NNNDVEKSTQIEKKPEKQGPEIQEEVVEMETVKDEQPPKTSAVRFKENSPRLM.

This Caenorhabditis elegans protein is Protein upregulated in glial subsets pugs-5.